A 161-amino-acid polypeptide reads, in one-letter code: PHD finger-containing protein 4 (161 aa).

The PHD-type zinc-finger motif lies at 30–80 (KKPCEVCGSNANDHAIMTCFLCRDTREHIYCARVHLRSVPRMWICEECRMN). Zn(2+) is bound by residues cysteine 33, cysteine 36, cysteine 48, cysteine 51, histidine 57, cysteine 60, cysteine 74, and cysteine 77. A compositionally biased stretch (polar residues) spans 114–132 (TMTSSDSGNQISATHQQPP). The disordered stretch occupies residues 114 to 161 (TMTSSDSGNQISATHQQPPQAHASPVAVPMDTSSSDNQQPPSDSESAI). Residues 146–161 (SSSDNQQPPSDSESAI) are compositionally biased toward low complexity.

As to quaternary structure, interacts directly with AIPP3/BDT1.

Functionally, together with AIPP3/BDT1, cooperates to form a BAH-PHD bivalent histone reader complex able to read histone H3 lysine 27 trimethylation (H3K27me3) histone marks in order to regulate transcription, especially to prevent early flowering; promotes AIPP3/BDT1 binding to H3K27me3. This chain is PHD finger-containing protein 4, found in Arabidopsis thaliana (Mouse-ear cress).